The primary structure comprises 313 residues: MRWSIIFTALLLTLCISPPAEELSREEYCSKVWRYDYECALNYILNDEEVQKVAAVAEKLKGVDCKDTAWKILEWEDENLVYDVEKASLPPPQIVVRGKEVEVYDTGRYIQTPSETIMLRKGICTDYAFLTLALLKYNGCKGYLVNVTFENDDVGHVAAAIAVNGTYFILDQHLPPFDPQGYFIKWLRDGKRIEKAEIIDNNTTIPLNLSIGYVASDRDAKSLESRIRQYFKGTGIREDPRLNGEKLPLGYREGYTLKLSLEMAEYYHPEFERQYAEHIYKLLEESIEGRFKAFNLHLSIKGDVMEIVLYLAR.

The protein belongs to the UPF0252 family.

The polypeptide is UPF0252 protein AF_0384 (Archaeoglobus fulgidus (strain ATCC 49558 / DSM 4304 / JCM 9628 / NBRC 100126 / VC-16)).